The chain runs to 206 residues: Small ribosomal subunit protein uS4 (206 aa).

The S4 RNA-binding domain occupies 96–156; that stretch reads GRLDNVVYRM…EKAKKQSRVK (61 aa).

The protein belongs to the universal ribosomal protein uS4 family. As to quaternary structure, part of the 30S ribosomal subunit. Contacts protein S5. The interaction surface between S4 and S5 is involved in control of translational fidelity.

One of the primary rRNA binding proteins, it binds directly to 16S rRNA where it nucleates assembly of the body of the 30S subunit. Functionally, with S5 and S12 plays an important role in translational accuracy. This chain is Small ribosomal subunit protein uS4, found in Serratia proteamaculans (strain 568).